A 221-amino-acid chain; its full sequence is Cyclin-U3-1 (221 aa).

This sequence belongs to the cyclin family. Cyclin U/P subfamily. In terms of assembly, interacts with CDKA-1 and CDKB1-1. As to expression, expressed in roots, stems and flowers. Expressed in the shoot apex, leaf primordia and young leaves.

In Arabidopsis thaliana (Mouse-ear cress), this protein is Cyclin-U3-1 (CYCU3-1).